We begin with the raw amino-acid sequence, 469 residues long: Putative dipeptidase SAB1611c (469 aa).

His-84 is a Zn(2+) binding site. Residue Asp-86 is part of the active site. Residue Asp-115 coordinates Zn(2+). The Proton acceptor role is filled by Glu-149. The Zn(2+) site is built by Glu-150, Asp-173, and His-440.

The protein belongs to the peptidase M20A family. Requires Zn(2+) as cofactor.

In Staphylococcus aureus (strain bovine RF122 / ET3-1), this protein is Putative dipeptidase SAB1611c.